The chain runs to 182 residues: Ribosome-recycling factor (182 aa).

The disordered stretch occupies residues 136–160 (VKKSEKDGDLSEDQSRDEQEKIQKE).

The protein belongs to the RRF family.

The protein resides in the cytoplasm. Functionally, responsible for the release of ribosomes from messenger RNA at the termination of protein biosynthesis. May increase the efficiency of translation by recycling ribosomes from one round of translation to another. This chain is Ribosome-recycling factor, found in Prochlorococcus marinus (strain NATL1A).